The following is a 506-amino-acid chain: CDK5 regulatory subunit-associated protein 3 (506 aa).

Short sequence motifs (shuffled ATG8-binding motif) lie at residues 267-270, 292-295, and 310-313; these read IDWG. The segment at 269 to 506 is required for interaction with UFL1 and mediates interaction with CHEK1; the sequence is WGDFGVEAVS…RPVNLMGTSL (238 aa). Positions 355–370 are RPL10a-binding domain (RBD); it reads DELMELEIFLAQRAVE. Lys450 is covalently cross-linked (Glycyl lysine isopeptide (Lys-Gly) (interchain with G-Cter in SUMO2)).

This sequence belongs to the CDK5RAP3 family. As to quaternary structure, substrate adapter component of the UFM1 ribosome E3 ligase (UREL) complex, composed of UFL1, DDRGK1 and CDK5RAP3. Interaction with UFL1 anchors CDK5RAP3 in the cytoplasm, preventing its translocation to the nucleus which allows expression of the CCND1 cyclin and progression of cells through the G1/S transition. Interacts with ATG8 family proteins MAP1LC3A, MAP1LC3B, GABARAP, GABARAPL1 and GABARAPL2. Interacts with CDK5R1; competes with CDK5RAP1 and CDK5RAP2. Interacts with RELA. Interacts with CHEK1; may negatively regulate CHEK1 and thereby stimulate entry into mitosis. Interacts with CDKN2A/ARF and MDM2; forms a ternary complex involved in regulation of p53/TP53. Interacts with MAPK14. Interacts with CCNB1. Interacts with TUBG1; may regulate CDK5RAP3 in mitotic G2/M transition checkpoint. In terms of assembly, (Microbial infection) Interacts with hepatitis B virus large envelope protein mutant pre-s2; promotes mitotic entry. Post-translationally, may be phosphorylated by CDK5. In terms of processing, ubiquitinated. Probably triggers proteasomal degradation and is negatively regulated by UFL1. May be ufmylated. Post-translationally, cleaved by caspases early during apoptosis, the resulting peptides may play a role in rupture of the nuclear envelope. In terms of tissue distribution, ubiquitously expressed. Expressed in heart, brain, placenta, lung, liver, skeletal muscle, kidney and pancreas. Isoform 3 is expressed in kidney, liver, skeletal muscle and placenta.

It localises to the endoplasmic reticulum membrane. Its subcellular location is the cytoplasm. It is found in the nucleus. The protein resides in the cytoskeleton. The protein localises to the microtubule organizing center. It localises to the centrosome. Its function is as follows. Substrate adapter of E3 ligase complexes mediating ufmylation, the covalent attachment of the ubiquitin-like modifier UFM1 to substrate proteins, and which is involved in various processes, such as ribosome recycling and reticulophagy (also called ER-phagy). As part of the UREL complex, plays a key role in ribosome recycling by promoting mono-ufmylation of RPL26/uL24 subunit of the 60S ribosome. Ufmylation of RPL26/uL24 occurs on free 60S ribosomes following ribosome dissociation: it weakens the junction between post-termination 60S subunits and SEC61 translocons, promoting release and recycling of the large ribosomal subunit from the endoplasmic reticulum membrane. Ufmylation of RPL26/uL24 and subsequent 60S ribosome recycling either take place after normal termination of translation or after ribosome stalling during cotranslational translocation at the endoplasmic reticulum. Within the UREL complex, CDK5RAP3 acts as a substrate adapter that constrains UFL1 ligase activity to mono-ufmylate RPL26/uL24 at 'Lys-134'. The UREL complex is also involved in reticulophagy in response to endoplasmic reticulum stress by promoting ufmylation of proteins such as CYB5R3, thereby promoting lysosomal degradation of ufmylated proteins. Also acts as a regulator of transcription: negatively regulates NF-kappa-B-mediated gene transcription through the control of RELA phosphorylation. Also regulates mitotic G2/M transition checkpoint and mitotic G2 DNA damage checkpoint. Through its interaction with CDKN2A/ARF and MDM2 may induce MDM2-dependent p53/TP53 ubiquitination, stabilization and activation in the nucleus, thereby promoting G1 cell cycle arrest and inhibition of cell proliferation. May also play a role in the rupture of the nuclear envelope during apoptosis. May regulate MAPK14 activity by regulating its dephosphorylation by PPM1D/WIP1. Required for liver development. (Microbial infection) May be negatively regulated by hepatitis B virus large envelope protein mutant pre-s2 to promote mitotic entry. The protein is CDK5 regulatory subunit-associated protein 3 of Homo sapiens (Human).